Here is a 194-residue protein sequence, read N- to C-terminus: Fe/S biogenesis protein NfuA (194 aa).

Positions 152 and 155 each coordinate [4Fe-4S] cluster.

The protein belongs to the NfuA family. In terms of assembly, homodimer. It depends on [4Fe-4S] cluster as a cofactor.

In terms of biological role, involved in iron-sulfur cluster biogenesis. Binds a 4Fe-4S cluster, can transfer this cluster to apoproteins, and thereby intervenes in the maturation of Fe/S proteins. Could also act as a scaffold/chaperone for damaged Fe/S proteins. The polypeptide is Fe/S biogenesis protein NfuA (Teredinibacter turnerae (strain ATCC 39867 / T7901)).